A 339-amino-acid polypeptide reads, in one-letter code: MYAFARKLLFSLDPETAHELSLDCLGAAERLQLLKPFVATPVSDPVEVMGLRFPNAVGLAAGLDKNADYFNALGQLGFGSVEVGTVTPLPQPGNPQPRLFRLIEEEGIINRMGFNNKGVAHLVAAVARRRYRGVLGINIGKNKATPEEQALSDYEKCMDAVYESADYIAINISSPNTPGLRNLQFGENLSHLLQGIKRRQALLHEATGKRVPIAVKIAPDMTDDEIKGVADALVSNQYEAVIATNTTVSRDEVPHSPHKEEMGGLSGRPVAEKSTHVIRVLAEHMQGAMPIIGVGGIMTGADAEEKIRAGASLVQLYSGFIYRGPALVSEAASAVAALS.

Residues 61 to 65 (AGLDK) and Thr-85 contribute to the FMN site. Lys-65 provides a ligand contact to substrate. 110–114 (NRMGF) contributes to the substrate binding site. FMN is bound by residues Asn-138 and Asn-171. A substrate-binding site is contributed by Asn-171. Ser-174 (nucleophile) is an active-site residue. Asn-176 serves as a coordination point for substrate. FMN is bound by residues Lys-216 and Thr-244. 245 to 246 (NT) contacts substrate. FMN contacts are provided by residues Gly-267, Gly-296, and 317-318 (YS).

It belongs to the dihydroorotate dehydrogenase family. Type 2 subfamily. As to quaternary structure, monomer. The cofactor is FMN.

Its subcellular location is the cell membrane. It catalyses the reaction (S)-dihydroorotate + a quinone = orotate + a quinol. Its pathway is pyrimidine metabolism; UMP biosynthesis via de novo pathway; orotate from (S)-dihydroorotate (quinone route): step 1/1. Functionally, catalyzes the conversion of dihydroorotate to orotate with quinone as electron acceptor. The protein is Dihydroorotate dehydrogenase (quinone) of Teredinibacter turnerae (strain ATCC 39867 / T7901).